We begin with the raw amino-acid sequence, 137 residues long: Molluscan insulin-related peptide 2 (137 aa).

Residues 1–31 form the signal peptide; it reads MVGVRLVFTNAFVVTVLLTLLLDVVVKPAEG. Glutamine 32 is subject to Pyrrolidone carboxylic acid. 3 disulfide bridges follow: cysteine 47–cysteine 123, cysteine 59–cysteine 136, and cysteine 122–cysteine 127. The propeptide at 71–83 is C-beta peptide like; the sequence is DAETGWLLPETMV. Residues 86 to 110 constitute a propeptide, C-alpha peptide like; it reads NAETDLDDPLRNIKLSSESALTYLT. A Pyrrolidone carboxylic acid modification is found at glutamine 113.

The protein belongs to the insulin family. Heterodimer of a B chain and an A chain linked by two disulfide bonds. In terms of tissue distribution, expressed in the cerebral light-green cells which are giant neuroendocrines cells involved in the control of growth.

The protein resides in the cytoplasmic vesicle. It is found in the secretory vesicle. This Lymnaea stagnalis (Great pond snail) protein is Molluscan insulin-related peptide 2.